The primary structure comprises 727 residues: Pentatricopeptide repeat-containing protein At2g33680 (727 aa).

PPR repeat units lie at residues 13–47 (HTST…GAST), 48–78 (CIQH…IICK), 79–116 (DVVS…DILP), 117–150 (NAYT…MSSF), 152–182 (DIYV…MPER), 183–213 (NTYT…FLRE), 220–254 (SDYV…GLLG), 255–285 (FVAL…SGDR), 286–320 (NSIT…GIKP), 321–355 (SEYT…GFER), 356–386 (HLFA…LQER), 387–421 (DVAL…GIIP), 422–456 (NDPT…GFGL), 457–487 (EVPI…TPNK), 488–522 (DVVS…GMEP), 523–553 (DDVT…MSDQ), and 559–593 (KVDH…HGLC). The interval 594-669 (LWRILLSACK…EVGCSWIELK (76 aa)) is type E motif. Residues 670–700 (NQYHVFVVGDTMHPMIEETKDLVCLVSRQMI) form a type E(+) motif region.

This sequence belongs to the PPR family. PCMP-E subfamily.

This Arabidopsis thaliana (Mouse-ear cress) protein is Pentatricopeptide repeat-containing protein At2g33680 (PCMP-E19).